Here is a 166-residue protein sequence, read N- to C-terminus: Putative signal peptidase complex catalytic subunit SEC11B (166 aa).

Residues 1 to 6 are Cytoplasmic-facing; it reads MNKWRL. Residues 7 to 24 traverse the membrane as a helical; Signal-anchor for type II membrane protein segment; sequence YYQVLNFGMIVSSALMIW. Residues 25 to 166 are Extracellular-facing; the sequence is KGLMVITGSE…LGLFVLVHRE (142 aa). Serine 43 is a catalytic residue.

This sequence belongs to the peptidase S26B family.

It is found in the membrane. It carries out the reaction Cleavage of hydrophobic, N-terminal signal or leader sequences from secreted and periplasmic proteins.. Its function is as follows. Putative component of some signal peptidase complex which removes signal peptides from nascent proteins as they are translocated into the lumen of the endoplasmic reticulum. The chain is Putative signal peptidase complex catalytic subunit SEC11B (SEC11B) from Homo sapiens (Human).